A 270-amino-acid polypeptide reads, in one-letter code: Interleukin-1 beta (270 aa).

Residues 1–118 constitute a propeptide that is removed on maturation; sequence MATVPEPTSE…VYDDDAFVCD (118 aa).

The protein belongs to the IL-1 family. In terms of assembly, monomer. In its precursor form, weakly interacts with full-length MEFV; the mature cytokine does not interact at all. Interacts with integrins ITGAV:ITGBV and ITGA5:ITGB1; integrin-binding is required for IL1B signaling. Interacts with cargo receptor TMED10; the interaction is direct and is required for the secretion of IL1B mature form. Interacts with HSP90AB1; the interaction facilitates cargo translocation into the ERGIC. Interacts with HSP90B1; the interaction facilitates cargo translocation into the ERGIC.

The protein localises to the cytoplasm. It is found in the cytosol. Its subcellular location is the secreted. It localises to the lysosome. The protein resides in the extracellular exosome. Functionally, potent pro-inflammatory cytokine. Initially discovered as the major endogenous pyrogen, induces prostaglandin synthesis, neutrophil influx and activation, T-cell activation and cytokine production, B-cell activation and antibody production, and fibroblast proliferation and collagen production. Promotes Th17 differentiation of T-cells. Synergizes with IL12/interleukin-12 to induce IFNG synthesis from T-helper 1 (Th1) cells. Plays a role in angiogenesis by inducing VEGF production synergistically with TNF and IL6. Involved in transduction of inflammation downstream of pyroptosis: its mature form is specifically released in the extracellular milieu by passing through the gasdermin-D (GSDMD) pore. The polypeptide is Interleukin-1 beta (IL1B) (Phoca vitulina richardii (Pacific harbor seal)).